The primary structure comprises 179 residues: Auxin-induced protein IAA6 (179 aa).

An EAR-like (transcriptional repression) motif is present at residues 13–17 (LRLGL). The tract at residues 31-52 (FSEIDGGVEENGGSGDRKSVDK) is disordered. The 89-residue stretch at 75-163 (KMYMKVSMDG…KRLRIMKRSD (89 aa)) folds into the PB1 domain.

This sequence belongs to the Aux/IAA family. Homodimers and heterodimers.

The protein resides in the nucleus. In terms of biological role, aux/IAA proteins are short-lived transcriptional factors that function as repressors of early auxin response genes at low auxin concentrations. Repression is thought to result from the interaction with auxin response factors (ARFs), proteins that bind to the auxin-responsive promoter element (AuxRE). Formation of heterodimers with ARF proteins may alter their ability to modulate early auxin response genes expression. This chain is Auxin-induced protein IAA6 (IAA6), found in Pisum sativum (Garden pea).